Reading from the N-terminus, the 187-residue chain is Putative gamma-glutamylcyclotransferase At3g02910 (187 aa).

17–20 contacts substrate; sequence YGTL. Glutamate 92 (proton acceptor) is an active-site residue.

The protein belongs to the gamma-glutamylcyclotransferase family.

Putative gamma-glutamylcyclotransferase. In Arabidopsis thaliana (Mouse-ear cress), this protein is Putative gamma-glutamylcyclotransferase At3g02910.